Consider the following 533-residue polypeptide: Peptide chain release factor 3 (533 aa).

In terms of domain architecture, tr-type G spans 11 to 284 (RRRRTFAIIS…ALVGLSPEPL (274 aa)). Residues 20–27 (SHPDAGKT), 92–96 (DTPGH), and 146–149 (NKLD) contribute to the GTP site.

This sequence belongs to the TRAFAC class translation factor GTPase superfamily. Classic translation factor GTPase family. PrfC subfamily.

The protein resides in the cytoplasm. In terms of biological role, increases the formation of ribosomal termination complexes and stimulates activities of RF-1 and RF-2. It binds guanine nucleotides and has strong preference for UGA stop codons. It may interact directly with the ribosome. The stimulation of RF-1 and RF-2 is significantly reduced by GTP and GDP, but not by GMP. This is Peptide chain release factor 3 from Ralstonia nicotianae (strain ATCC BAA-1114 / GMI1000) (Ralstonia solanacearum).